Reading from the N-terminus, the 674-residue chain is DNA ligase (674 aa).

NAD(+)-binding positions include 35–39, 82–83, and glutamate 116; these read DAEYD and SL. Lysine 118 serves as the catalytic N6-AMP-lysine intermediate. The NAD(+) site is built by arginine 139, glutamate 174, lysine 282, and lysine 306. Residues cysteine 400, cysteine 403, cysteine 418, and cysteine 424 each contribute to the Zn(2+) site. Positions 593 to 674 constitute a BRCT domain; the sequence is SYVSLIHGKT…WLQYIQPNKV (82 aa).

This sequence belongs to the NAD-dependent DNA ligase family. LigA subfamily. The cofactor is Mg(2+). Mn(2+) is required as a cofactor.

It catalyses the reaction NAD(+) + (deoxyribonucleotide)n-3'-hydroxyl + 5'-phospho-(deoxyribonucleotide)m = (deoxyribonucleotide)n+m + AMP + beta-nicotinamide D-nucleotide.. DNA ligase that catalyzes the formation of phosphodiester linkages between 5'-phosphoryl and 3'-hydroxyl groups in double-stranded DNA using NAD as a coenzyme and as the energy source for the reaction. It is essential for DNA replication and repair of damaged DNA. The chain is DNA ligase from Ehrlichia ruminantium (strain Welgevonden).